A 302-amino-acid polypeptide reads, in one-letter code: Polyamine aminopropyltransferase (302 aa).

Residues 4 to 239 enclose the PABS domain; sequence WTWHLEWQTP…GLWGFIYASD (236 aa). S-methyl-5'-thioadenosine is bound at residue Gln33. His64 and Glu88 together coordinate spermidine. Residues Asp108 and 140-141 contribute to the S-methyl-5'-thioadenosine site; that span reads DG. Residue Asp158 is the Proton acceptor of the active site. Pro167 is an S-methyl-5'-thioadenosine binding site.

This sequence belongs to the spermidine/spermine synthase family. As to quaternary structure, homodimer or homotetramer.

It is found in the cytoplasm. It catalyses the reaction S-adenosyl 3-(methylsulfanyl)propylamine + putrescine = S-methyl-5'-thioadenosine + spermidine + H(+). Its pathway is amine and polyamine biosynthesis; spermidine biosynthesis; spermidine from putrescine: step 1/1. Functionally, catalyzes the irreversible transfer of a propylamine group from the amino donor S-adenosylmethioninamine (decarboxy-AdoMet) to putrescine (1,4-diaminobutane) to yield spermidine. This Sulfolobus acidocaldarius (strain ATCC 33909 / DSM 639 / JCM 8929 / NBRC 15157 / NCIMB 11770) protein is Polyamine aminopropyltransferase.